The following is a 138-amino-acid chain: Putative nickel-responsive regulator (138 aa).

Ni(2+) is bound by residues H78, H89, H91, and C97.

This sequence belongs to the transcriptional regulatory CopG/NikR family. Requires Ni(2+) as cofactor.

Transcriptional regulator. This Thermococcus onnurineus (strain NA1) protein is Putative nickel-responsive regulator.